The sequence spans 521 residues: Probable methylmalonate-semialdehyde/malonate-semialdehyde dehydrogenase [acylating], mitochondrial (521 aa).

Ala170, Phe172, Lys196, Glu199, Arg200, and Ser249 together coordinate NAD(+). The Nucleophile role is filled by Cys304. An NAD(+)-binding site is contributed by Glu404.

This sequence belongs to the aldehyde dehydrogenase family. Homotetramer.

It is found in the mitochondrion. It catalyses the reaction 2-methyl-3-oxopropanoate + NAD(+) + CoA + H2O = propanoyl-CoA + hydrogencarbonate + NADH + H(+). It carries out the reaction 3-oxopropanoate + NAD(+) + CoA + H2O = hydrogencarbonate + acetyl-CoA + NADH + H(+). Functionally, probable malonate and methylmalonate semialdehyde dehydrogenase involved in the catabolism of valine, thymine, and compounds catabolized by way of beta-alanine, including uracil and cytidine. The sequence is that of Probable methylmalonate-semialdehyde/malonate-semialdehyde dehydrogenase [acylating], mitochondrial from Anopheles gambiae (African malaria mosquito).